We begin with the raw amino-acid sequence, 84 residues long: ATP synthase subunit c (84 aa).

Transmembrane regions (helical) follow at residues 9 to 29 and 54 to 74; these read IIASAILLAVAALGTALGFAI and IVAGLLDAISMIAVGIALLFI.

It belongs to the ATPase C chain family. In terms of assembly, F-type ATPases have 2 components, F(1) - the catalytic core - and F(0) - the membrane proton channel. F(1) has five subunits: alpha(3), beta(3), gamma(1), delta(1), epsilon(1). F(0) has three main subunits: a(1), b(2) and c(10-14). The alpha and beta chains form an alternating ring which encloses part of the gamma chain. F(1) is attached to F(0) by a central stalk formed by the gamma and epsilon chains, while a peripheral stalk is formed by the delta and b chains.

Its subcellular location is the cell inner membrane. F(1)F(0) ATP synthase produces ATP from ADP in the presence of a proton or sodium gradient. F-type ATPases consist of two structural domains, F(1) containing the extramembraneous catalytic core and F(0) containing the membrane proton channel, linked together by a central stalk and a peripheral stalk. During catalysis, ATP synthesis in the catalytic domain of F(1) is coupled via a rotary mechanism of the central stalk subunits to proton translocation. Functionally, key component of the F(0) channel; it plays a direct role in translocation across the membrane. A homomeric c-ring of between 10-14 subunits forms the central stalk rotor element with the F(1) delta and epsilon subunits. In Pasteurella multocida (strain Pm70), this protein is ATP synthase subunit c.